The sequence spans 317 residues: Protein-methionine-sulfoxide reductase catalytic subunit MsrP (317 aa).

Residues 1–40 constitute a signal peptide (tat-type signal); sequence MKKLTSNDVTPEEIFYQRRKIIKAFGLSAVATALPTFSFA. Residues Asn-71, 74–75, Cys-129, Thr-164, Asn-216, Arg-221, and 232–234 contribute to the Mo-molybdopterin site; these read YE and SIK.

Belongs to the MsrP family. In terms of assembly, heterodimer of a catalytic subunit (MsrP) and a heme-binding subunit (MsrQ). Mo-molybdopterin is required as a cofactor. Predicted to be exported by the Tat system. The position of the signal peptide cleavage has not been experimentally proven.

It localises to the periplasm. The enzyme catalyses L-methionyl-[protein] + a quinone + H2O = L-methionyl-(S)-S-oxide-[protein] + a quinol. It catalyses the reaction L-methionyl-[protein] + a quinone + H2O = L-methionyl-(R)-S-oxide-[protein] + a quinol. Part of the MsrPQ system that repairs oxidized periplasmic proteins containing methionine sulfoxide residues (Met-O), using respiratory chain electrons. Thus protects these proteins from oxidative-stress damage caused by reactive species of oxygen and chlorine generated by the host defense mechanisms. MsrPQ is essential for the maintenance of envelope integrity under bleach stress, rescuing a wide series of structurally unrelated periplasmic proteins from methionine oxidation. The catalytic subunit MsrP is non-stereospecific, being able to reduce both (R-) and (S-) diastereoisomers of methionine sulfoxide. The polypeptide is Protein-methionine-sulfoxide reductase catalytic subunit MsrP (Histophilus somni (strain 2336) (Haemophilus somnus)).